A 439-amino-acid polypeptide reads, in one-letter code: 3-phosphoshikimate 1-carboxyvinyltransferase (439 aa).

3-phosphoshikimate contacts are provided by K29, S30, and R34. Residue K29 coordinates phosphoenolpyruvate. Phosphoenolpyruvate-binding residues include G100 and R128. 3-phosphoshikimate contacts are provided by S173, S174, Q175, S201, D321, and K348. Q175 is a binding site for phosphoenolpyruvate. Residue D321 is the Proton acceptor of the active site. Phosphoenolpyruvate contacts are provided by R352 and R395.

The protein belongs to the EPSP synthase family. Monomer.

The protein localises to the cytoplasm. It catalyses the reaction 3-phosphoshikimate + phosphoenolpyruvate = 5-O-(1-carboxyvinyl)-3-phosphoshikimate + phosphate. It participates in metabolic intermediate biosynthesis; chorismate biosynthesis. Catalyzes the transfer of the enolpyruvyl moiety of phosphoenolpyruvate (PEP) to the 5-hydroxyl of shikimate-3-phosphate (S3P) to produce enolpyruvyl shikimate-3-phosphate and inorganic phosphate. The sequence is that of 3-phosphoshikimate 1-carboxyvinyltransferase from Halobacterium salinarum (strain ATCC 700922 / JCM 11081 / NRC-1) (Halobacterium halobium).